A 207-amino-acid polypeptide reads, in one-letter code: Small ribosomal subunit protein uS4 (207 aa).

Positions serine 97 to leucine 160 constitute an S4 RNA-binding domain.

This sequence belongs to the universal ribosomal protein uS4 family. As to quaternary structure, part of the 30S ribosomal subunit. Contacts protein S5. The interaction surface between S4 and S5 is involved in control of translational fidelity.

Its function is as follows. One of the primary rRNA binding proteins, it binds directly to 16S rRNA where it nucleates assembly of the body of the 30S subunit. In terms of biological role, with S5 and S12 plays an important role in translational accuracy. The sequence is that of Small ribosomal subunit protein uS4 from Burkholderia mallei (strain NCTC 10247).